A 1494-amino-acid chain; its full sequence is MGNKIARTTQVSATEYYLHDLPSSYNLVLKEVLGRGRFLKSIQCKHDEGLVVVKVYFKRGDSIDLREYERRLVKIKDVFLSLEHPHVWPFQFWQETDKAAYLVRQYFYSNLHDRLSTRPFLSLVEKKWLAFQLLLAVKQCHEKDICHGDIKCENVLLTSWNWLYLADFASFKPTYIPYDDPSDFSFFFDTRGQRLCYLAPERFYEHGGETQVAQDAPLKPSMDIFAVGCVIAELFLEGQPLFELAQLLAYRRGQHDPSQHLEKIPDPGIRKMILHMIQLEPEARLSAEDYLQNYVGVVFPNYFSPFLHTLYCCWNPLPSDMRVATCQGIFQEILKKMMENKSGDEIGVDSPVTSNPMNASTVQETFANHKLNSSKDLIRNTVNSKDEIFYSISDALKKNRHPFLKKITMDDLGTLMSLYDSRSDTYGTPFLPVEGNMRCEGMVLIASMLCSCIRNIKLPHLRREAILLLRSCSLYIDDDDRLQRVLPYVVALLSDPTAIVRCAAMETLCDILPLVRDFPPSDAKIFPEYIFPMLSMLPEDTEESVRICYASNIAKLALTAYGFLIHSFQLSDVGVLNELNSQQISTTPASETPSHLQKANGNAQLQQLRKTIAEVVQELVMGPKQTPNVRRALLQDIGELCFFFGQRQSNDFLLPILPAFLNDRDEQLRSVFFEKIVYVCFFVGQRSVEEYLLPYIDQALSDQTEAVIVNALECLSTLCKSSFLRKRALLQMIECVYPLLCYPSQWVRRAVVTFIAASSECLGAVDSYAFIAPVIRSYLSRLPASIASEEGLLSCLKPPVTREVVYRIFEKTRNPEFMAKQRKMWYSSSPQSKDWESVDLFDKDAGELNSVECRAEQKQSVEGKKQIKSASKQPEVQGKYAEKDAKLRIPRNPRPNASNTVELRDPVYPEKLQFSGFMAPYVSGANSFIEPENIPLYSFSMDKRAATNPPVASESSLQMNSLGMGSLSVPWMDSMSKSFNLASSVPVPKLISGSFHVGTNPKQFYRVVHEPESRENDQISSAISKFQDLGVSSSSKSASVTSEDASSPADLVGEPSLSRTSVPDSGWKPRGVLVAHLQEHRSAVNDIATSSDHSFFVSASDDSTVKVWDSRKLEKDISFRSRLTYHLEGSRGMCTTMLRNSTQVVVGASDGVIHMFSIDHISRGLGNVVEKYSGIVDIKKKDVKEGALVSLLNYTADSLSGPMVMYSTQNCGIHLWDTRSDLDAWTLKANPEEGYVSSLVTSPCGNWFVSGSSRGVLTLWDLRFRVPVNSWQYPIICPIEKMCLCFLPPSVSVSTTMKPLIYVAAGCNEVSLWNAEGGSCHQVLRVANYENETDVSEFQWKLPSNKVNPKPNHRQNMSSKYRIEELNEPPPRLPGIRSLLPLPGGDLLTGGTDLKIRRWDYSSPERSYCICGPSLKGVGNDDFYELKTNTGVQFVQETKRRPLATKLTAKAVLAAAATDTAGCHRDSVQSLASVKLNQRLLISSSRDGAIKVWK.

G2 carries N-myristoyl glycine lipidation. In terms of domain architecture, Protein kinase spans 27–307; that stretch reads LVLKEVLGRG…VFPNYFSPFL (281 aa). ATP contacts are provided by residues 33 to 41 and K54; that span reads LGRGRFLKS. D149 serves as the catalytic Proton acceptor. 7 HEAT repeats span residues 383–421, 480–517, 524–562, 610–646, 648–685, 687–724, and 727–764; these read NSKD…LYDS, DRLQ…LVRD, KIFP…TAYG, KTIA…FFGQ, QSND…FVGQ, SVEE…SSFL, and RALL…CLGA. Disordered regions lie at residues 859–903 and 1037–1064; these read QSVE…TVEL and SASV…SVPD. Low complexity predominate over residues 1037 to 1047; it reads SASVTSEDASS. WD repeat units lie at residues 1079-1118, 1127-1166, 1184-1226, 1231-1270, 1276-1323, 1371-1409, and 1466-1494; these read EHRS…KDIS, LEGS…RGLG, KEGA…DAWT, PEEG…PVNS, ICPI…CHQV, PRLP…RSYC, and DSVQ…KVWK.

The protein belongs to the protein kinase superfamily. Ser/Thr protein kinase family. Interacts with VPS34. Component of a complex made of VPS38/USL1 and PI3K main subunits such as VPS15, ATG6/VPS30 and VPS34. Autophosphorylated. In terms of tissue distribution, mainly expressed in anthers, pollen grains and pollen tubes, and, to a lower extent, in other tissues and organs including seedlings, roots, stems, leaves, flowers, pitils and siliques.

Its subcellular location is the cytoplasm. It is found in the golgi apparatus. It localises to the trans-Golgi network membrane. The protein resides in the endosome membrane. It carries out the reaction L-seryl-[protein] + ATP = O-phospho-L-seryl-[protein] + ADP + H(+). The catalysed reaction is L-threonyl-[protein] + ATP = O-phospho-L-threonyl-[protein] + ADP + H(+). Functionally, serine/threonine-protein kinase required for cytoplasm to vacuole transport (Cvt) and autophagy as a part of the autophagy-specific VPS34 PI3-kinase complex I. Required for pollen development and germination, probably via the modulation of phosphatidylinositol 3-phosphate (PI3P) formation and vacuolar organization. The polypeptide is Serine/threonine-protein kinase VPS15 (Arabidopsis thaliana (Mouse-ear cress)).